The sequence spans 239 residues: Tetraspanin-9 (239 aa).

Over 1–12 the chain is Cytoplasmic; sequence MARGCLCCVKYM. Residues 13–33 form a helical membrane-spanning segment; sequence LFLFNLLFWLGGCGLLGVGVW. Topologically, residues 34 to 55 are extracellular; that stretch reads LSVSQGSFATLSPSFPSISAAN. The chain crosses the membrane as a helical span at residues 56–76; it reads LIITLGAVIMVTGFLGCLGAI. The Cytoplasmic portion of the chain corresponds to 77-85; that stretch reads KENKCLLLS. The chain crosses the membrane as a helical span at residues 86-106; that stretch reads FFITLLVILLAELILLILFFV. The Extracellular portion of the chain corresponds to 107–203; the sequence is YTDNVSENAR…VEEWLDDNKH (97 aa). N110 and N180 each carry an N-linked (GlcNAc...) asparagine glycan. The helical transmembrane segment at 204–224 threads the bilayer; it reads LLGTIAMCVLVIQLLGMAFSM. Residues 225-239 are Cytoplasmic-facing; sequence TLYQQIHRSGKKYEA.

The protein belongs to the tetraspanin (TM4SF) family.

The protein resides in the membrane. In Salmo salar (Atlantic salmon), this protein is Tetraspanin-9 (tspan9).